We begin with the raw amino-acid sequence, 330 residues long: (11Z)-hexadec-11-enoyl-CoA conjugase (330 aa).

The next 2 membrane-spanning stretches (helical) occupy residues 37–57 (IVVM…YGLY) and 65–85 (LATS…ITAG). The short motif at 87-92 (HRLWSH) is the Histidine box-1 element. A helical transmembrane segment spans residues 101–121 (LEILLMVFNSIAFQNTIFTWV). A Histidine box-2 motif is present at residues 124–128 (HRLHH). The next 2 membrane-spanning stretches (helical) occupy residues 185 to 205 (AIPF…MYFW) and 216 to 238 (TVLR…HLWG). The Histidine box-3 motif lies at 264–268 (HNYHH).

It belongs to the fatty acid desaturase type 1 family. Requires Fe(2+) as cofactor. Highly expressed in the pheromone gland.

It is found in the membrane. The catalysed reaction is an 11,12-saturated fatty acyl-CoA + 2 Fe(II)-[cytochrome b5] + O2 + 2 H(+) = an (11Z)-Delta(11)-fatty acyl-CoA + 2 Fe(III)-[cytochrome b5] + 2 H2O. It carries out the reaction (11Z)-hexadecenoyl-CoA + AH2 + O2 = (10E,12Z)-hexadecadienoyl-CoA + A + 2 H2O. In terms of biological role, fatty acid desaturase that catalyzes 2 consecutive steps in the biosynthesis of bombykol, a sex pheromone produced by the moth. First acts as an acyl-CoA Delta(11) desaturase (1) by catalyzing the formation of Delta(11) fatty acyl precursors. Then acts as a (11Z)-hexadec-11-enoyl-CoA conjugase (2) by converting a single cis double bond at position 11 of (11Z)-hexadec-11-enoyl-CoA into conjugated 10 trans and 12 cis double bonds. This is (11Z)-hexadec-11-enoyl-CoA conjugase from Bombyx mori (Silk moth).